A 145-amino-acid polypeptide reads, in one-letter code: MQEVTIYSDGACKGNPGRGGWGAVLVAGASEKEMFGGEPNTTNNRMEMTAVIEALRALKRPCVVRVYTDSQYVQKGISEWLPGWKARGWKTADKKPVKNADLWQELDTLAQPHQISWHWVRGHNGHPGNERADALANRGVESIGR.

Residues 1-141 (MQEVTIYSDG…ADALANRGVE (141 aa)) enclose the RNase H type-1 domain. 4 residues coordinate Mg(2+): aspartate 9, glutamate 47, aspartate 69, and aspartate 133.

Belongs to the RNase H family. In terms of assembly, monomer. The cofactor is Mg(2+).

The protein localises to the cytoplasm. It catalyses the reaction Endonucleolytic cleavage to 5'-phosphomonoester.. Its function is as follows. Endonuclease that specifically degrades the RNA of RNA-DNA hybrids. The polypeptide is Ribonuclease H (Cupriavidus necator (strain ATCC 17699 / DSM 428 / KCTC 22496 / NCIMB 10442 / H16 / Stanier 337) (Ralstonia eutropha)).